The primary structure comprises 915 residues: Translation initiation factor IF-2 (915 aa).

Disordered regions lie at residues 1–105 (MSEG…RALT) and 121–295 (VEAA…RAAI). Low complexity predominate over residues 57 to 81 (PGTPSAPEGGSSSAPAPQSGNAPQG). A compositionally biased stretch (gly residues) spans 84–101 (RSGGGNRGSGRGGAGGAG). 2 stretches are compositionally biased toward basic and acidic residues: residues 121–135 (VEAARREVERREQEK) and 143–180 (EEARRREEEAKRAAEEEARRKEQEEADRIAAEAARKAA). Positions 186 to 195 (AEAPPVPPPA) are enriched in pro residues. Composition is skewed to low complexity over residues 201-213 (AAPSSRSAPSRTA) and 230-239 (KVPVAAPSAP). Residues 243-256 (RLRERGDEGEEERK) are compositionally biased toward basic and acidic residues. Over residues 266–278 (PAPRKAAAPVAKK) the composition is skewed to low complexity. The span at 279 to 295 (AVAEPRRGGRIDVRAAI) shows a compositional bias: basic and acidic residues. In terms of domain architecture, tr-type G spans 414 to 584 (PRPPVVTVMG…LLQAEVLDLK (171 aa)). The tract at residues 423–430 (GHVDHGKT) is G1. 423 to 430 (GHVDHGKT) provides a ligand contact to GTP. The interval 448–452 (GITQH) is G2. The segment at 470 to 473 (DTPG) is G3. Residues 470-474 (DTPGH) and 524-527 (NKCD) contribute to the GTP site. Positions 524-527 (NKCD) are G4. The interval 560–562 (SAL) is G5.

Belongs to the TRAFAC class translation factor GTPase superfamily. Classic translation factor GTPase family. IF-2 subfamily.

It localises to the cytoplasm. Functionally, one of the essential components for the initiation of protein synthesis. Protects formylmethionyl-tRNA from spontaneous hydrolysis and promotes its binding to the 30S ribosomal subunits. Also involved in the hydrolysis of GTP during the formation of the 70S ribosomal complex. The polypeptide is Translation initiation factor IF-2 (Granulibacter bethesdensis (strain ATCC BAA-1260 / CGDNIH1)).